The sequence spans 819 residues: Advillin (819 aa).

A core region spans residues M1 to D731. The Gelsolin-like 1 repeat unit spans residues M24–S73. A Phosphotyrosine modification is found at Y85. Residues K109–K116 and R135–R143 contribute to the a 1,2-diacyl-sn-glycero-3-phospho-(1D-myo-inositol-4,5-bisphosphate) site. 5 Gelsolin-like repeats span residues I145–L185, L262–Q306, E403–A454, T525–A565, and F628–K669. Residues F628–F819 form a required for interaction with F-actin region. The tract at residues A732–F819 is headpiece. 2 positions are modified to phosphotyrosine: Y748 and Y758. Positions D753–F819 constitute an HP domain.

It belongs to the villin/gelsolin family. In terms of assembly, associates (via C-terminus) with actin. Interacts with F-actin. Interacts with SCARF1; the interaction occurs in embryonic dorsal root ganglions at 18 dpc and induces neurite-like outgrowth. Interacts with PLCE1. Interacts with ACTR2 and ACTR3; associates with the ARP2/3 complex. In terms of tissue distribution, most highly expressed in the endometrium of the uterus, the intestinal villi and the testes. Weaker expression also detected in the brain, dorsal root ganglions and on the surface of the tongue.

The protein resides in the cytoplasm. Its subcellular location is the cytoskeleton. It is found in the cell projection. It localises to the lamellipodium. The protein localises to the cell junction. The protein resides in the focal adhesion. Its subcellular location is the neuron projection. It is found in the axon. Functionally, ca(2+)-regulated actin-binding protein which plays an important role in actin bundling. May have a unique function in the morphogenesis of neuronal cells which form ganglia. Required for SREC1-mediated regulation of neurite-like outgrowth. Plays a role in regenerative sensory axon outgrowth and remodeling processes after peripheral injury in neonates. Involved in the formation of long fine actin-containing filopodia-like structures in fibroblast. Plays a role in ciliogenesis. In podocytes, controls lamellipodia formation through the regulation of EGF-induced diacylglycerol generation by PLCE1 and ARP2/3 complex assembly. This chain is Advillin, found in Mus musculus (Mouse).